Consider the following 334-residue polypeptide: Porphobilinogen deaminase (334 aa).

S-(dipyrrolylmethanemethyl)cysteine is present on Cys-258.

Belongs to the HMBS family. In terms of assembly, monomer. It depends on dipyrromethane as a cofactor.

It catalyses the reaction 4 porphobilinogen + H2O = hydroxymethylbilane + 4 NH4(+). It functions in the pathway porphyrin-containing compound metabolism; protoporphyrin-IX biosynthesis; coproporphyrinogen-III from 5-aminolevulinate: step 2/4. Functionally, tetrapolymerization of the monopyrrole PBG into the hydroxymethylbilane pre-uroporphyrinogen in several discrete steps. This is Porphobilinogen deaminase from Ralstonia nicotianae (strain ATCC BAA-1114 / GMI1000) (Ralstonia solanacearum).